We begin with the raw amino-acid sequence, 169 residues long: MKNKQTEDFPESFYVMIEIPMGSNCKYEYKEELDNIVLDRVLFTAMTYPANYGFALDTRGKDGDPLDVLVFSSVSINPGIIVRCRAIGVAEMNDEEGEDNKILAVPVDKVDPASSIVRNESDIPEYQKDKLKHFFEHYKELEKGKFMKFHGFKGRDEAVKQLAEARLKQ.

Substrate-binding residues include Lys26, Arg40, and Tyr52. The Mg(2+) site is built by Asp62, Asp67, and Asp99. Residue Tyr138 participates in substrate binding.

The protein belongs to the PPase family. In terms of assembly, homohexamer. It depends on Mg(2+) as a cofactor.

The protein resides in the cytoplasm. It catalyses the reaction diphosphate + H2O = 2 phosphate + H(+). In terms of biological role, catalyzes the hydrolysis of inorganic pyrophosphate (PPi) forming two phosphate ions. In Thermoplasma volcanium (strain ATCC 51530 / DSM 4299 / JCM 9571 / NBRC 15438 / GSS1), this protein is Inorganic pyrophosphatase.